The chain runs to 268 residues: MTLLNVSDLSHHYAHGGFSGKHQHQAVLNNVSLTLKSGETVALLGRSGCGKSTLSRLLVGLESPSQGNISWRGESLAKLNRAQRKAFRRDIQMVFQDSISAVNPRKTVREILREPMRHLLSLKKSEQLARASEMLHAVDLDDSVLDKRPPQLSGGQLQRVCLARALAVEPKLLILDEAVSNLDLVLQAGVIRLLKKLQQQFGTACLFITHDLRLVERFCQRVMVMDNGQIVETQAVGEKLTFSSDAGRVLQNAILPAFPVRRRATEKV.

An ABC transporter domain is found at 4–252; it reads LNVSDLSHHY…SSDAGRVLQN (249 aa). 45–52 provides a ligand contact to ATP; sequence GRSGCGKS.

The protein belongs to the ABC transporter superfamily. Nickel importer (TC 3.A.1.5.3) family. The complex is composed of two ATP-binding proteins (NikD and NikE), two transmembrane proteins (NikB and NikC) and a solute-binding protein (NikA).

It is found in the cell inner membrane. The catalysed reaction is Ni(2+)(out) + ATP + H2O = Ni(2+)(in) + ADP + phosphate + H(+). Its function is as follows. Part of the ABC transporter complex NikABCDE involved in nickel import. Responsible for energy coupling to the transport system. The sequence is that of Nickel import ATP-binding protein NikE from Escherichia coli O157:H7.